Reading from the N-terminus, the 374-residue chain is Tuliposide A-converting enzyme b3, amyloplastic (374 aa).

An amyloplast-targeting transit peptide spans 1 to 68; sequence MSAALFCGPP…TNSSLSPSPT (68 aa). Residue Ser-226 is the Acyl-ester intermediate of the active site. Active-site charge relay system residues include Asp-316 and His-348.

It belongs to the AB hydrolase superfamily. Homodimer. As to expression, highly expressed in pistil and bulb scales. Lower expression in stem, and barely detected in root, leaf, petal and stamen.

It localises to the plastid. It is found in the amyloplast. It catalyses the reaction 6-tuliposide A = tulipalin A + D-glucose. Its function is as follows. Lactone-forming carboxylesterases, specifically catalyzing intramolecular transesterification, but not hydrolysis. Involved in the biosynthesis of tulipalins, defensive chemicals that show antimicrobial activities against a broad range of strains of bacteria and fungi. Substrates are 6-tuliposide A &gt; 6-tuliposide B. The polypeptide is Tuliposide A-converting enzyme b3, amyloplastic (TCEA-B3) (Tulipa gesneriana (Garden tulip)).